A 128-amino-acid polypeptide reads, in one-letter code: Glyoxylase-like domain-containing protein (128 aa).

The VOC domain maps to 6 to 125 (QISGIEIPAT…EGNTHAICTR (120 aa)).

The protein operates within mycotoxin biosynthesis. In terms of biological role, glyoxylase-like domain-containing protein; part of the gene cluster that mediates the biosynthesis of the selective antifungal agent ascochitine, an o-quinone methide that plays a possible protective role against other microbial competitors in nature and is considered to be important for pathogenicity of legume-associated Didymella species. The pathway probably begins with the synthesis of a keto-aldehyde intermediate by the ascochitine non-reducing polyketide synthase pksAC from successive condensations of 4 malonyl-CoA units, presumably with a simple acetyl-CoA starter unit. Release of the keto-aldehyde intermediate is consistent with the presence of the C-terminal reductive release domain. The HR-PKS (orf7) probably makes a diketide starter unit which is passed to the non-reducing polyketide synthase pksAC for further extension, producing ascochital and ascochitine. The aldehyde dehydrogenase (orf1), the 2-oxoglutarate-dependent dioxygenase (orf3) and the dehydrogenase (orf9) are probably involved in subsequent oxidations of methyl groups to the carboxylic acid of the heterocyclic ring. The ascochitine gene cluster also includes a gene encoding a short peptide with a cupin domain (orf2) that is often found in secondary metabolite gene clusters and which function has still to be determined. This Didymella fabae (Leaf and pod spot disease fungus) protein is Glyoxylase-like domain-containing protein.